Consider the following 828-residue polypeptide: Putative dual specificity tyrosine-phosphorylation-regulated kinase 3 homolog (828 aa).

Basic and acidic residues predominate over residues 1 to 14 (MVGSQEKKNNHIEL). The interval 1–26 (MVGSQEKKNNHIELSETPATDKNNLN) is disordered. Residues 17–26 (TPATDKNNLN) are compositionally biased toward polar residues. The 314-residue stretch at 276–589 (YEMLKIIGKG…PSEALKHPWL (314 aa)) folds into the Protein kinase domain. Residues 282 to 290 (IGKGSFGQV) and lysine 305 each bind ATP. The Proton acceptor role is filled by aspartate 402. Serine 616 is subject to Phosphoserine.

Belongs to the protein kinase superfamily. CMGC Ser/Thr protein kinase family. MNB/DYRK subfamily. In terms of processing, autophosphorylated on tyrosine residues.

It carries out the reaction L-seryl-[protein] + ATP = O-phospho-L-seryl-[protein] + ADP + H(+). The catalysed reaction is L-threonyl-[protein] + ATP = O-phospho-L-threonyl-[protein] + ADP + H(+). The enzyme catalyses L-tyrosyl-[protein] + ATP = O-phospho-L-tyrosyl-[protein] + ADP + H(+). This Drosophila melanogaster (Fruit fly) protein is Putative dual specificity tyrosine-phosphorylation-regulated kinase 3 homolog (Dyrk3).